The chain runs to 377 residues: Peroxisomal membrane protein PEX14 (377 aa).

Over residues 1–20 (MASSEQAEQPSQPSSSPGSE) the composition is skewed to low complexity. The interval 1-23 (MASSEQAEQPSQPSSSPGSENVV) is disordered. Ala-2 bears the N-acetylalanine mark. Over 2–108 (ASSEQAEQPS…CSPGSSRWRD (107 aa)) the chain is Peroxisomal. N6-acetyllysine is present on Lys-34. The chain crosses the membrane as a helical span at residues 109 to 126 (YGALAIIMAGIAFGFHQL). At 127–377 (YKKYLLPLIL…EGASNESERH (251 aa)) the chain is on the cytoplasmic side. The disordered stretch occupies residues 230–377 (PPSPSAPKIP…EGASNESERH (148 aa)). Ser-232 is modified (phosphoserine). Low complexity-rich tracts occupy residues 244-259 (PVKS…VNHH) and 265-275 (SPVSNESTSSS). Residues Ser-282 and Ser-335 each carry the phosphoserine modification. Residues 323 to 342 (KEEEEEEEEEDVSHVDEEDV) show a composition bias toward acidic residues. Residues 360-377 (QVDKLRRPEGASNESERH) show a composition bias toward basic and acidic residues.

Belongs to the peroxin-14 family. Interacts with PEX13; forming the PEX13-PEX14 docking complex. Interacts with PEX5 (via WxxxF/Y motifs). Interacts with PEX19. Interacts with tubulin.

Its subcellular location is the peroxisome membrane. Component of the PEX13-PEX14 docking complex, a translocon channel that specifically mediates the import of peroxisomal cargo proteins bound to PEX5 receptor. The PEX13-PEX14 docking complex forms a large import pore which can be opened to a diameter of about 9 nm. Mechanistically, PEX5 receptor along with cargo proteins associates with the PEX14 subunit of the PEX13-PEX14 docking complex in the cytosol, leading to the insertion of the receptor into the organelle membrane with the concomitant translocation of the cargo into the peroxisome matrix. Plays a key role for peroxisome movement through a direct interaction with tubulin. The protein is Peroxisomal membrane protein PEX14 of Cricetulus longicaudatus (Long-tailed dwarf hamster).